Consider the following 154-residue polypeptide: Ascorbate-specific PTS system EIIA component (154 aa).

Residues Ser6 to Thr150 form the PTS EIIA type-2 domain. Catalysis depends on His68, which acts as the Tele-phosphohistidine intermediate. At His68 the chain carries Phosphohistidine.

Its subcellular location is the cytoplasm. In terms of biological role, the phosphoenolpyruvate-dependent sugar phosphotransferase system (sugar PTS), a major carbohydrate active transport system, catalyzes the phosphorylation of incoming sugar substrates concomitantly with their translocation across the cell membrane. The enzyme II UlaABC PTS system is involved in ascorbate transport. This Shigella dysenteriae serotype 1 (strain Sd197) protein is Ascorbate-specific PTS system EIIA component (ulaC).